The sequence spans 315 residues: ATP synthase gamma chain (315 aa).

Belongs to the ATPase gamma chain family. In terms of assembly, F-type ATPases have 2 components, CF(1) - the catalytic core - and CF(0) - the membrane proton channel. CF(1) has five subunits: alpha(3), beta(3), gamma(1), delta(1), epsilon(1). CF(0) has three main subunits: a, b and c.

It localises to the cellular thylakoid membrane. In terms of biological role, produces ATP from ADP in the presence of a proton gradient across the membrane. The gamma chain is believed to be important in regulating ATPase activity and the flow of protons through the CF(0) complex. This chain is ATP synthase gamma chain, found in Synechococcus sp. (strain RCC307).